A 225-amino-acid polypeptide reads, in one-letter code: Membrane protein (225 aa).

The Virion surface portion of the chain corresponds to 1–20 (MSNETNCTLDFEQSVELFKE). The helical transmembrane segment at 21 to 41 (YNLFITAFLLFLTIILQYGYA) threads the bilayer. At 42-51 (TRSKFIYILK) the chain is on the intravirion side. The chain crosses the membrane as a helical span at residues 52–72 (MIVLWCFWPLNIAVGVISCIY). The Virion surface segment spans residues 73–77 (PPNTG). A helical membrane pass occupies residues 78–98 (GLVAAIILTVFACLSFVGYWI). Topologically, residues 99 to 225 (QSIRLFKRCR…VATGGSSLYT (127 aa)) are intravirion.

It belongs to the gammacoronaviruses M protein family. Homomultimer. Interacts with envelope E protein in the budding compartment of the host cell, which is located between endoplasmic reticulum and the Golgi complex. Forms a complex with HE and S proteins. Interacts with nucleocapsid N protein. This interaction probably participates in RNA packaging into the virus.

The protein localises to the virion membrane. Its subcellular location is the host Golgi apparatus membrane. Functionally, component of the viral envelope that plays a central role in virus morphogenesis and assembly via its interactions with other viral proteins. The sequence is that of Membrane protein from Gallus gallus (Chicken).